Here is a 339-residue protein sequence, read N- to C-terminus: Heat-inducible transcription repressor HrcA (339 aa).

The protein belongs to the HrcA family.

In terms of biological role, negative regulator of class I heat shock genes (grpE-dnaK-dnaJ and groELS operons). Prevents heat-shock induction of these operons. This is Heat-inducible transcription repressor HrcA from Parafrankia sp. (strain EAN1pec).